The chain runs to 212 residues: Negative modulator of initiation of replication (212 aa).

Interaction with DNA regions lie at residues 113–114 (AV) and 144–148 (RTRVY).

The protein belongs to the SeqA family. In terms of assembly, homodimer. Polymerizes to form helical filaments.

It localises to the cytoplasm. Functionally, negative regulator of replication initiation, which contributes to regulation of DNA replication and ensures that replication initiation occurs exactly once per chromosome per cell cycle. Binds to pairs of hemimethylated GATC sequences in the oriC region, thus preventing assembly of replication proteins and re-initiation at newly replicated origins. Repression is relieved when the region becomes fully methylated. In Actinobacillus succinogenes (strain ATCC 55618 / DSM 22257 / CCUG 43843 / 130Z), this protein is Negative modulator of initiation of replication.